Here is a 342-residue protein sequence, read N- to C-terminus: Voltage-gated hydrogen channel 1 (342 aa).

Disordered regions lie at residues 1–20 and 74–102; these read MEGDNCNKSRHKSHNMINPN and FNDNNNHERPAPQEQSTQNTMISMQSEQK. Residues 1–148 lie on the Cytoplasmic side of the membrane; the sequence is MEGDNCNKSR…KLRHILHSKP (148 aa). Residues 86–102 show a composition bias toward polar residues; that stretch reads QEQSTQNTMISMQSEQK. Residues 149–169 traverse the membrane as a helical segment; it reads IHVAIIVLVVLDSFLVVGELL. Topologically, residues 170–185 are extracellular; that stretch reads IDLKVIIVPHGNPAPE. The helical transmembrane segment at 186–208 threads the bilayer; it reads ILHGFSLSILSIFMVEIALKIIA. Residues 209 to 217 are Cytoplasmic-facing; the sequence is DHRHFIHHK. Residues 218-238 form a helical membrane-spanning segment; it reads VEVLDAVVVVISFGVDIALIF. The Extracellular segment spans residues 239-247; sequence VGESEALAA. The helical transmembrane segment at 248–268 threads the bilayer; the sequence is IGLLVILRLWRVFRIINGIIV. At 269–342 the chain is on the cytoplasmic side; sequence TVKTKADDRV…HSTTTASADV (74 aa). Positions 271–315 form a coiled coil; it reads KTKADDRVHEIKKKNSELELQIHNLEEKLSQKEQDMSRLHEILRC.

The protein belongs to the hydrogen channel family. Homodimer.

It is found in the membrane. The protein resides in the cell membrane. Less sensitive to zinc ions as compared to the mammalian homologs. Its function is as follows. Mediates the voltage-dependent proton permeability of excitable membranes. Forms a proton-selective channel through which protons may pass in accordance with their electrochemical gradient. In Ciona intestinalis (Transparent sea squirt), this protein is Voltage-gated hydrogen channel 1 (HVCN1).